The primary structure comprises 545 residues: Cytochrome P450 monooxygenase 212 (545 aa).

The first 14 residues, Met1 to Gly14, serve as a signal peptide directing secretion. Cys486 provides a ligand contact to heme.

Belongs to the cytochrome P450 family. The cofactor is heme.

It functions in the pathway secondary metabolite biosynthesis. Its function is as follows. Cytochrome P450 monooxygenase that is able to use anthracene and pyrene as substrates for oxidation. The protein is Cytochrome P450 monooxygenase 212 of Postia placenta (strain ATCC 44394 / Madison 698-R) (Brown rot fungus).